We begin with the raw amino-acid sequence, 440 residues long: Origin recognition complex subunit 4 (440 aa).

64–71 provides a ligand contact to ATP; it reads GPKGSGKS.

Belongs to the ORC4 family. ORC is composed of six subunits.

It localises to the nucleus. Its function is as follows. Component of the origin recognition complex (ORC) that binds origins of replication. DNA-binding is ATP-dependent, however specific DNA sequences that define origins of replication have not been identified so far. ORC is required to assemble the pre-replication complex necessary to initiate DNA replication. The sequence is that of Origin recognition complex subunit 4 (orcD) from Dictyostelium discoideum (Social amoeba).